Consider the following 140-residue polypeptide: MSTEYRTGREGEFTYRGHDLDELQEMSLEDVAELLPARQRRTITRGLSEEHHKVLAEARESGTEETANNPIRTHLRDMPVLPEFVGLTFAVYTGQEFERVEVQPEMIGHYLGEFQLTRSSVEHGQAGIGATRSSKFVPLK.

A disordered region spans residues 55 to 74 (LAEARESGTEETANNPIRTH).

It belongs to the universal ribosomal protein uS19 family.

Its function is as follows. Protein S19 forms a complex with S13 that binds strongly to the 16S ribosomal RNA. The sequence is that of Small ribosomal subunit protein uS19 from Halobacterium salinarum (strain ATCC 29341 / DSM 671 / R1).